The primary structure comprises 216 residues: MOB kinase activator 3B (216 aa).

Zn(2+)-binding residues include cysteine 82, cysteine 87, histidine 164, and histidine 169.

Its function is as follows. Modulates LATS1 expression in the Hippo signaling pathway which plays a pivotal role in organ size control and tumor suppression by restricting proliferation and promoting apoptosis. In Mus musculus (Mouse), this protein is MOB kinase activator 3B (Mob3b).